We begin with the raw amino-acid sequence, 181 residues long: uncharacterized protein (181 aa).

Topologically, residues 1 to 14 are cytoplasmic; that stretch reads MQKCIMRSTEFKTH. Residues 15 to 35 form a helical membrane-spanning segment; the sequence is FSFHSIFSFPLSAALLALISA. Residues 36 to 58 are Extracellular-facing; that stretch reads SEPASKAFINVQFISSPLVKKEV. A helical membrane pass occupies residues 59-79; sequence LPFIVSFHSLSSNGILSFSPF. Over 80-84 the chain is Cytoplasmic; it reads TSSNL. Residues 85–105 traverse the membrane as a helical segment; sequence SIAQLPFLIKVPLLSMGSLAL. Residues 106 to 116 lie on the Extracellular side of the membrane; that stretch reads ENFNKFIPRAD. The helical transmembrane segment at 117–137 threads the bilayer; the sequence is LVAAWVTIIMVFTFGNFLSTL. Residues 138 to 153 lie on the Cytoplasmic side of the membrane; that stretch reads SIKTGQNLWHLSKISS. Residues 154 to 174 form a helical membrane-spanning segment; it reads SVSPLLLGIILGSQSGEIMLG. Topologically, residues 175 to 181 are extracellular; it reads KNLLITS.

The protein localises to the membrane. This is an uncharacterized protein from Saccharomyces cerevisiae (strain ATCC 204508 / S288c) (Baker's yeast).